Consider the following 75-residue polypeptide: uncharacterized protein (75 aa).

This is an uncharacterized protein from Escherichia coli (strain K12).